Reading from the N-terminus, the 378-residue chain is Calponin homolog OV9M (378 aa).

Positions 1–20 (MPAQPAQENAQDADDAQANA) are enriched in low complexity. A disordered region spans residues 1-35 (MPAQPAQENAQDADDAQANATMETRVAGQGQPKRV). 7 Calponin-like repeats span residues 50-75 (IPSQAGWNKGDSQKLMTNFGTPRNTQ), 98-123 (VRLQSGTNKFESQRGMTGFGTGRDVC), 151-176 (VRLQAGTNKYDSQKGMTGFGTARRET), 197-222 (IPLQAGTNKFASQKGMIGFGTSRRET), 244-269 (IPSQMGSNKYASQKGMTGFGQPRWEV), 285-310 (VRLQSGTNRFASQQGMTGFGTPRNTT), and 330-355 (IPSQAGWNRGDSQKGMTGFGAPRDVK). The segment at 175-194 (ETTKMTDSKHPDYDHERPDQ) is disordered. The segment at 230 to 256 (HPEYDPESSIDSSTIPSQMGSNKYASQ) is disordered. The segment covering 238–256 (SIDSSTIPSQMGSNKYASQ) has biased composition (polar residues). The disordered stretch occupies residues 331–352 (PSQAGWNRGDSQKGMTGFGAPR).

This sequence belongs to the calponin family. Found in the longitudinal muscles below the hypodermis.

Functionally, could be involved in muscle contraction. This is Calponin homolog OV9M from Onchocerca volvulus.